The sequence spans 842 residues: DNA mismatch repair protein MutS (842 aa).

596–603 (GPNMSGKS) serves as a coordination point for ATP.

The protein belongs to the DNA mismatch repair MutS family.

Its function is as follows. This protein is involved in the repair of mismatches in DNA. It is possible that it carries out the mismatch recognition step. This protein has a weak ATPase activity. This chain is DNA mismatch repair protein MutS, found in Exiguobacterium sp. (strain ATCC BAA-1283 / AT1b).